The following is a 455-amino-acid chain: Glutamate--tRNA ligase (455 aa).

The 'HIGH' region signature appears at 8-18 (PSPTGYLHIGG). The 'KMSKS' region motif lies at 231-235 (RLSKR). Lys234 contacts ATP.

This sequence belongs to the class-I aminoacyl-tRNA synthetase family. Glutamate--tRNA ligase type 1 subfamily. As to quaternary structure, monomer.

It is found in the cytoplasm. It catalyses the reaction tRNA(Glu) + L-glutamate + ATP = L-glutamyl-tRNA(Glu) + AMP + diphosphate. Catalyzes the attachment of glutamate to tRNA(Glu) in a two-step reaction: glutamate is first activated by ATP to form Glu-AMP and then transferred to the acceptor end of tRNA(Glu). The protein is Glutamate--tRNA ligase of Vesicomyosocius okutanii subsp. Calyptogena okutanii (strain HA).